The chain runs to 200 residues: Max dimerization protein 3 (200 aa).

Disordered stretches follow at residues 26-56 (EHGYASILPCDPATPGRRKRQRTNSNPDNVR) and 134-164 (LLPPNTERIRTDSLDSSTLSSERSDSDQEDL). A bHLH domain is found at 54–106 (NVRSVHNELEKHRRAQLRRCLEQLKQQVPLSMENSRHTTLSLLHRAKQHIKKL).

In terms of assembly, efficient DNA binding requires dimerization with another bHLH protein. Binds DNA as a heterodimer with MAX.

The protein resides in the nucleus. Functionally, transcriptional repressor. Binds with MAX to form a sequence-specific DNA-binding protein complex which recognizes the core sequence 5'-CAC[GA]TG-3'. This chain is Max dimerization protein 3 (mxd3), found in Xenopus tropicalis (Western clawed frog).